A 156-amino-acid polypeptide reads, in one-letter code: Arginine repressor (156 aa).

Belongs to the ArgR family.

Its subcellular location is the cytoplasm. It participates in amino-acid biosynthesis; L-arginine biosynthesis [regulation]. Regulates arginine biosynthesis genes. This chain is Arginine repressor, found in Vibrio atlanticus (strain LGP32) (Vibrio splendidus (strain Mel32)).